The following is a 475-amino-acid chain: Methylenetetrahydrofolate--tRNA-(uracil-5-)-methyltransferase TrmFO (475 aa).

Residue 13–18 (GAGLAG) participates in FAD binding.

It belongs to the MnmG family. TrmFO subfamily. FAD serves as cofactor.

The protein resides in the cytoplasm. It carries out the reaction uridine(54) in tRNA + (6R)-5,10-methylene-5,6,7,8-tetrahydrofolate + NADH + H(+) = 5-methyluridine(54) in tRNA + (6S)-5,6,7,8-tetrahydrofolate + NAD(+). The enzyme catalyses uridine(54) in tRNA + (6R)-5,10-methylene-5,6,7,8-tetrahydrofolate + NADPH + H(+) = 5-methyluridine(54) in tRNA + (6S)-5,6,7,8-tetrahydrofolate + NADP(+). Functionally, catalyzes the folate-dependent formation of 5-methyl-uridine at position 54 (M-5-U54) in all tRNAs. The polypeptide is Methylenetetrahydrofolate--tRNA-(uracil-5-)-methyltransferase TrmFO (Bradyrhizobium diazoefficiens (strain JCM 10833 / BCRC 13528 / IAM 13628 / NBRC 14792 / USDA 110)).